A 365-amino-acid chain; its full sequence is Peptide chain release factor 2 (365 aa).

Gln-252 bears the N5-methylglutamine mark.

Belongs to the prokaryotic/mitochondrial release factor family. Post-translationally, methylated by PrmC. Methylation increases the termination efficiency of RF2.

The protein resides in the cytoplasm. In terms of biological role, peptide chain release factor 2 directs the termination of translation in response to the peptide chain termination codons UGA and UAA. The protein is Peptide chain release factor 2 of Tolumonas auensis (strain DSM 9187 / NBRC 110442 / TA 4).